Consider the following 525-residue polypeptide: uncharacterized protein (525 aa).

Composition is skewed to polar residues over residues 139–149 (LNSTPDKTQAG) and 336–349 (SGKTDNAQETHTTS). Disordered regions lie at residues 139–158 (LNSTPDKTQAGKTAKQHQAP) and 330–356 (PAPAKNSGKTDNAQETHTTSPPGPYAT).

This is an uncharacterized protein from Treponema pallidum (strain Nichols).